A 397-amino-acid polypeptide reads, in one-letter code: Kappa-carrageenase (397 aa).

Residues 1–25 (MKPISIVAFPIPAISMLLLSAVSQA) form the signal peptide. In terms of domain architecture, GH16 spans 26 to 299 (ASMQPPIAKP…YVRTWVKVGN (274 aa)). C98 and C268 form a disulfide bridge. E163 functions as the Nucleophile in the catalytic mechanism. Residue D165 is part of the active site. The active-site Proton donor is E168. Residues 316 to 387 (AVNSVQLSAA…TITVKTKNKG (72 aa)) form the BIG2 domain.

The protein belongs to the glycosyl hydrolase 16 family.

The protein resides in the periplasm. The catalysed reaction is Endohydrolysis of (1-&gt;4)-beta-D-linkages between D-galactose 4-sulfate and 3,6-anhydro-D-galactose in kappa-carrageenans.. The protein is Kappa-carrageenase (cgkA) of Pseudoalteromonas carrageenovora (Alteromonas carrageenovora).